We begin with the raw amino-acid sequence, 116 residues long: Mercuric transport protein MerT (116 aa).

Helical transmembrane passes span 16–36 (LAAI…ALGF) and 46–66 (VLEP…FFAW). The Hg(2+) site is built by C24 and C25. Hg(2+) contacts are provided by C76 and C82. A helical transmembrane segment spans residues 94-114 (IFWVVAALVLVALGFPYVMPF).

Belongs to the MerT family.

The protein localises to the cell inner membrane. Its function is as follows. Involved in mercury resistance. Probably transfers a mercuric ion from the periplasmic Hg(2+)-binding protein MerP to the cytoplasmic mercuric reductase MerA. The chain is Mercuric transport protein MerT from Serratia marcescens.